We begin with the raw amino-acid sequence, 44 residues long: uncharacterized protein (44 aa).

The signal sequence occupies residues 1–16 (MRISLLAVILALLFVA).

This is an uncharacterized protein from Helicobacter pylori (strain ATCC 700392 / 26695) (Campylobacter pylori).